A 24-amino-acid polypeptide reads, in one-letter code: Retinol-binding protein 3 (24 aa).

It localises to the secreted. Its subcellular location is the extracellular space. The protein localises to the extracellular matrix. It is found in the interphotoreceptor matrix. In terms of biological role, IRBP shuttles 11-cis and all trans retinoids between the retinol isomerase in the pigment epithelium and the visual pigments in the photoreceptor cells of the retina. This chain is Retinol-binding protein 3 (RBP3), found in Ovis aries (Sheep).